A 604-amino-acid chain; its full sequence is Sulfite reductase [NADPH] flavoprotein alpha-component (604 aa).

Residues Val-66–Val-204 enclose the Flavodoxin-like domain. FMN-binding positions include Ser-72–Ala-77, Ser-119–Gly-122, and Leu-155–Cys-164. Residues Ala-212–Ala-231 form a disordered region. Over residues Ala-216–Ala-231 the composition is skewed to low complexity. The region spanning Ala-239–Pro-453 is the FAD-binding FR-type domain. Residues Thr-327, Gln-361, Arg-391–Ser-394, Thr-409–Gly-411, and Gly-424–Ser-427 contribute to the FAD site. Residues Ser-524–Arg-525, Lys-530–Gln-534, and Asp-566 contribute to the NADP(+) site. Residue Tyr-604 participates in FAD binding.

The protein belongs to the NADPH-dependent sulphite reductase flavoprotein subunit CysJ family. In the N-terminal section; belongs to the flavodoxin family. This sequence in the C-terminal section; belongs to the flavoprotein pyridine nucleotide cytochrome reductase family. In terms of assembly, alpha(8)-beta(8). The alpha component is a flavoprotein, the beta component is a hemoprotein. FAD serves as cofactor. Requires FMN as cofactor.

The enzyme catalyses hydrogen sulfide + 3 NADP(+) + 3 H2O = sulfite + 3 NADPH + 4 H(+). The protein operates within sulfur metabolism; hydrogen sulfide biosynthesis; hydrogen sulfide from sulfite (NADPH route): step 1/1. In terms of biological role, component of the sulfite reductase complex that catalyzes the 6-electron reduction of sulfite to sulfide. This is one of several activities required for the biosynthesis of L-cysteine from sulfate. The flavoprotein component catalyzes the electron flow from NADPH -&gt; FAD -&gt; FMN to the hemoprotein component. This is Sulfite reductase [NADPH] flavoprotein alpha-component from Neisseria meningitidis serogroup C / serotype 2a (strain ATCC 700532 / DSM 15464 / FAM18).